Here is a 249-residue protein sequence, read N- to C-terminus: Aspartate/glutamate leucyltransferase (249 aa).

The protein belongs to the R-transferase family. Bpt subfamily.

The protein localises to the cytoplasm. The enzyme catalyses N-terminal L-glutamyl-[protein] + L-leucyl-tRNA(Leu) = N-terminal L-leucyl-L-glutamyl-[protein] + tRNA(Leu) + H(+). The catalysed reaction is N-terminal L-aspartyl-[protein] + L-leucyl-tRNA(Leu) = N-terminal L-leucyl-L-aspartyl-[protein] + tRNA(Leu) + H(+). Its function is as follows. Functions in the N-end rule pathway of protein degradation where it conjugates Leu from its aminoacyl-tRNA to the N-termini of proteins containing an N-terminal aspartate or glutamate. The protein is Aspartate/glutamate leucyltransferase of Xanthobacter autotrophicus (strain ATCC BAA-1158 / Py2).